Consider the following 340-residue polypeptide: MGTIPTKIAIDAMGGDYAPSEIVEGAIKAQEAYGVKVLLAGDPQQIKASMNHRLSQPLPEIVPAEDIVEMHEEPLMAVRRKPKASINIAMKLVKDKQADAVVSAGNSGAAMASALLRLGRIPGIDRPAIGAVLPTMIPKKPVLILDVGANVDCRPKYLDQFAVMGTIYSESVLATDEPKVGLLNIGEEPSKGNDLAVRTYQILQENNQIKFIGNAEGRDVLSGKFDVIVCDGFAGNILLKFAEAVGDAVLQMMREELTPGLSGKIGTAILRPNLKNMKQRIDHVEHGGGLLLGVGGICIISHGSSKAQSISNAVRSAKEAVENRVLERINSKYLLEVENQ.

Belongs to the PlsX family. Homodimer. Probably interacts with PlsY.

Its subcellular location is the cytoplasm. The enzyme catalyses a fatty acyl-[ACP] + phosphate = an acyl phosphate + holo-[ACP]. The protein operates within lipid metabolism; phospholipid metabolism. In terms of biological role, catalyzes the reversible formation of acyl-phosphate (acyl-PO(4)) from acyl-[acyl-carrier-protein] (acyl-ACP). This enzyme utilizes acyl-ACP as fatty acyl donor, but not acyl-CoA. The sequence is that of Phosphate acyltransferase from Trichodesmium erythraeum (strain IMS101).